Reading from the N-terminus, the 116-residue chain is Large ribosomal subunit protein bL17 (116 aa).

The protein belongs to the bacterial ribosomal protein bL17 family. As to quaternary structure, part of the 50S ribosomal subunit. Contacts protein L32.

The chain is Large ribosomal subunit protein bL17 from Sulfurovum sp. (strain NBC37-1).